Reading from the N-terminus, the 161-residue chain is UPF0178 protein Rsph17025_3122 (161 aa).

This sequence belongs to the UPF0178 family.

The polypeptide is UPF0178 protein Rsph17025_3122 (Cereibacter sphaeroides (strain ATCC 17025 / ATH 2.4.3) (Rhodobacter sphaeroides)).